The sequence spans 371 residues: Cytochrome b (371 aa).

4 helical membrane-spanning segments follow: residues F24–L44, W68–I89, W104–L124, and F169–V189. 2 residues coordinate heme b: H74 and H88. Heme b is bound by residues H173 and H187. H192 contributes to the a ubiquinone binding site. 4 helical membrane-spanning segments follow: residues Y217–A237, L279–H299, L311–T331, and F338–P357.

Belongs to the cytochrome b family. The cytochrome bc1 complex contains 3 respiratory subunits (MT-CYB, CYC1 and UQCRFS1), 2 core proteins (UQCRC1 and UQCRC2) and probably 6 low-molecular weight proteins. Heme b serves as cofactor.

The protein resides in the mitochondrion inner membrane. Functionally, component of the ubiquinol-cytochrome c reductase complex (complex III or cytochrome b-c1 complex) that is part of the mitochondrial respiratory chain. The b-c1 complex mediates electron transfer from ubiquinol to cytochrome c. Contributes to the generation of a proton gradient across the mitochondrial membrane that is then used for ATP synthesis. The protein is Cytochrome b (MT-CYB) of Homoroselaps lacteus (Spotted harlequin snake).